We begin with the raw amino-acid sequence, 161 residues long: Large ribosomal subunit protein uL11 (161 aa).

Belongs to the universal ribosomal protein uL11 family. Part of the ribosomal stalk of the 50S ribosomal subunit. Interacts with L10 and the large rRNA to form the base of the stalk. L10 forms an elongated spine to which L12 dimers bind in a sequential fashion forming a multimeric L10(L12)X complex.

Forms part of the ribosomal stalk which helps the ribosome interact with GTP-bound translation factors. The polypeptide is Large ribosomal subunit protein uL11 (Methanosarcina mazei (strain ATCC BAA-159 / DSM 3647 / Goe1 / Go1 / JCM 11833 / OCM 88) (Methanosarcina frisia)).